The following is a 267-amino-acid chain: MAVVNGNYIPGRLDGRVAVVTGSGRGIGAAIAVHLGRLGANIVVNYANSALDAQKVVDQIKGAGSEAIAIKADIRDVSQIMRLFDEAVAHFGHVDIAVSNSGVVSFGHLKDVTEEEFDRVFSLNTRGQFFVAREAYRHLSEGGRIIMTSSNTSKDFSVPRHSLYSGSKGAVDSFVRIFSKDCGDKKITVNGVAPGGTVTDMFHDVSHHYIPDGEKYTAEQRQQMAAFASPLHRNGFPEDIANVVGFLASKEGEWINGKVINLDGGAA.

Residues I27, D73, N100, and R133 each coordinate NADP(+). Active-site proton donor residues include S149 and S150. 3 residues coordinate NADP(+): Y164, K168, and T199. Y164 (proton acceptor) is an active-site residue. The Lowers pKa of active site Tyr role is filled by K168.

It belongs to the short-chain dehydrogenases/reductases (SDR) family.

It participates in pigment biosynthesis. Non-reducing polyketide synthase; part of the gene cluster that mediates the biosynthesis of the bianthraquinone cladofulvin, a conidial pigment not required for virulence but that plays a role in fitness and resistance to environmental stresses including UV light and low-temperature stress. The pathway begins with the synthesis of atrochrysone thioester by the polyketide synthase (PKS) claG. The atrochrysone carboxyl ACP thioesterase claF then breaks the thioester bond and releases the atrochrysone carboxylic acid from claG. This compound is decarboxylated by claH to yield emodin, which is further converted to chrysophanol hydroquinone by the reductase claC and the dehydratase claB. The cytochrome monooxygenase P450 claM then catalyzes the dimerization of nataloe-emodin to cladofulvin. The chain is Short chain dehydrogenase claC from Passalora fulva (Tomato leaf mold).